We begin with the raw amino-acid sequence, 180 residues long: MLENRLYKRSDFWKLFSRKYKLTKTIEHMMIDSIDIQENDRILEIGIGNGTVFKSITKKLKKGSLKSIDPSKRKVRQISRANRKNMGNGEVFHGYPEDIPFDDRTFNKVFSLHTVQSCTDIRLALREIYRVLQIDGRFYISIDTNTGEKEKTYIQLLKDQHFRDLSVIRRASCLCIVAVK.

This sequence belongs to the methyltransferase superfamily.

The protein is Putative methyltransferase YrhH (yrhH) of Bacillus subtilis (strain 168).